The sequence spans 109 residues: Ribulose bisphosphate carboxylase small subunit (109 aa).

This sequence belongs to the RuBisCO small chain family. As to quaternary structure, heterohexadecamer of 8 large and 8 small subunits. Forms complexes of many stoichiometries with Raf1 and RbcL.

The protein localises to the carboxysome. RuBisCO catalyzes two reactions: the carboxylation of D-ribulose 1,5-bisphosphate, the primary event in carbon dioxide fixation, as well as the oxidative fragmentation of the pentose substrate in the photorespiration process. Both reactions occur simultaneously and in competition at the same active site. Although the small subunit is not catalytic it is essential for maximal activity. This Nostoc sp. (strain PCC 7120 / SAG 25.82 / UTEX 2576) protein is Ribulose bisphosphate carboxylase small subunit.